The following is a 357-amino-acid chain: Prostaglandin E2 receptor EP2 subtype (357 aa).

Topologically, residues 1 to 24 are extracellular; that stretch reads MDNSFNDSRRVENCESRQYLLSDE. The N-linked (GlcNAc...) asparagine glycan is linked to Asn-6. Residues 25–48 form a helical membrane-spanning segment; it reads SPAISSVMFTAGVLGNLIALALLA. Over 49-66 the chain is Cytoplasmic; sequence RRWRGDTGCSAGSRTSIS. Residues 67 to 92 form a helical membrane-spanning segment; the sequence is LFHVLVTELVLTDLLGTCLISPVVLA. The Extracellular portion of the chain corresponds to 93–112; that stretch reads SYSRNQTLVALAPESRACTY. Cysteines 110 and 188 form a disulfide. The chain crosses the membrane as a helical span at residues 113–133; the sequence is FAFTMTFFSLATMLMLFAMAL. Residues 134 to 152 are Cytoplasmic-facing; it reads ERYLAIGHPYFYRRRVSRR. A helical membrane pass occupies residues 153–177; the sequence is GGLAVLPAIYGVSLLFCSLPLLNYG. Residues 178–199 lie on the Extracellular side of the membrane; sequence EYVQYCPGTWCFIQHGRTAYLQ. The chain crosses the membrane as a helical span at residues 200 to 224; the sequence is LYATVLLLLIVAVLGCNISVILNLI. The Cytoplasmic portion of the chain corresponds to 225–262; the sequence is RMQLRSKRSRCGLSGSSLRGPGSRRRGERTSMAEETDH. The segment covering 235–245 has biased composition (low complexity); it reads CGLSGSSLRGP. Residues 235–255 form a disordered region; that stretch reads CGLSGSSLRGPGSRRRGERTS. A helical transmembrane segment spans residues 263–286; sequence LILLAIMTITFAVCSLPFTIFAYM. At 287–299 the chain is on the extracellular side; that stretch reads DETSSRKEKWDLR. The chain crosses the membrane as a helical span at residues 300–323; sequence ALRFLSVNSIIDPWVFVILRPPVL. At 324–357 the chain is on the cytoplasmic side; sequence RLMRSVLCCRTSLRAPEAPGASCSTQQTDLCGQL.

The protein belongs to the G-protein coupled receptor 1 family.

It is found in the cell membrane. Functionally, receptor for prostaglandin E2 (PGE2). The activity of this receptor is mediated by G(s) proteins that stimulate adenylate cyclase. The subsequent raise in intracellular cAMP is responsible for the relaxing effect of this receptor on smooth muscle. This Rattus norvegicus (Rat) protein is Prostaglandin E2 receptor EP2 subtype (Ptger2).